A 107-amino-acid polypeptide reads, in one-letter code: Nucleoid-associated protein CE0210 (107 aa).

This sequence belongs to the YbaB/EbfC family. In terms of assembly, homodimer.

The protein resides in the cytoplasm. The protein localises to the nucleoid. Its function is as follows. Binds to DNA and alters its conformation. May be involved in regulation of gene expression, nucleoid organization and DNA protection. This chain is Nucleoid-associated protein CE0210, found in Corynebacterium efficiens (strain DSM 44549 / YS-314 / AJ 12310 / JCM 11189 / NBRC 100395).